The following is a 320-amino-acid chain: UDP-N-acetylenolpyruvoylglucosamine reductase (320 aa).

Residues arginine 34 to glutamate 200 enclose the FAD-binding PCMH-type domain. Arginine 180 is a catalytic residue. Serine 229 functions as the Proton donor in the catalytic mechanism. Glutamate 299 is an active-site residue.

It belongs to the MurB family. FAD serves as cofactor.

It localises to the cytoplasm. The catalysed reaction is UDP-N-acetyl-alpha-D-muramate + NADP(+) = UDP-N-acetyl-3-O-(1-carboxyvinyl)-alpha-D-glucosamine + NADPH + H(+). The protein operates within cell wall biogenesis; peptidoglycan biosynthesis. Cell wall formation. This is UDP-N-acetylenolpyruvoylglucosamine reductase from Mesorhizobium japonicum (strain LMG 29417 / CECT 9101 / MAFF 303099) (Mesorhizobium loti (strain MAFF 303099)).